Here is a 287-residue protein sequence, read N- to C-terminus: uncharacterized protein (287 aa).

The segment covering 1-17 (MRWQGRRESDNVEDRRN) has biased composition (basic and acidic residues). Residues 1-29 (MRWQGRRESDNVEDRRNSSGGPSMGGPGF) form a disordered region. The helical transmembrane segment at 38 to 60 (LILLIVVLVAGYYGVDLTGLMTG) threads the bilayer.

It is found in the membrane. This is an uncharacterized protein from Escherichia coli O6:H1 (strain CFT073 / ATCC 700928 / UPEC).